The chain runs to 246 residues: Putative outer membrane protein YiaT (246 aa).

An N-terminal signal peptide occupies residues 1 to 21 (MLINRNIVALFALPFMASATA).

Belongs to the MipA/OmpV family.

It is found in the cell outer membrane. The protein is Putative outer membrane protein YiaT (yiaT) of Escherichia coli (strain K12).